A 542-amino-acid polypeptide reads, in one-letter code: CTP synthase (542 aa).

The segment at 1-265 (MARYVFITGG…DDEVLAAFGI (265 aa)) is amidoligase domain. Position 13 (Ser-13) interacts with CTP. Position 13 (Ser-13) interacts with UTP. ATP is bound by residues 14–19 (SLGKGI) and Asp-71. Residues Asp-71 and Glu-139 each coordinate Mg(2+). CTP-binding positions include 146–148 (DIE), 186–191 (KTKPTQ), and Lys-222. UTP contacts are provided by residues 186-191 (KTKPTQ) and Lys-222. The region spanning 291 to 541 (TIAIVGKYTG…IEAATEQSRL (251 aa)) is the Glutamine amidotransferase type-1 domain. Gly-353 provides a ligand contact to L-glutamine. Cys-380 functions as the Nucleophile; for glutamine hydrolysis in the catalytic mechanism. L-glutamine is bound by residues 381–384 (FGMQ), Glu-404, and Arg-469. Catalysis depends on residues His-514 and Glu-516.

It belongs to the CTP synthase family. As to quaternary structure, homotetramer.

It catalyses the reaction UTP + L-glutamine + ATP + H2O = CTP + L-glutamate + ADP + phosphate + 2 H(+). It carries out the reaction L-glutamine + H2O = L-glutamate + NH4(+). The enzyme catalyses UTP + NH4(+) + ATP = CTP + ADP + phosphate + 2 H(+). Its pathway is pyrimidine metabolism; CTP biosynthesis via de novo pathway; CTP from UDP: step 2/2. Allosterically activated by GTP, when glutamine is the substrate; GTP has no effect on the reaction when ammonia is the substrate. The allosteric effector GTP functions by stabilizing the protein conformation that binds the tetrahedral intermediate(s) formed during glutamine hydrolysis. Inhibited by the product CTP, via allosteric rather than competitive inhibition. In terms of biological role, catalyzes the ATP-dependent amination of UTP to CTP with either L-glutamine or ammonia as the source of nitrogen. Regulates intracellular CTP levels through interactions with the four ribonucleotide triphosphates. This chain is CTP synthase, found in Rhizobium leguminosarum bv. trifolii (strain WSM2304).